A 627-amino-acid polypeptide reads, in one-letter code: Anti-CBASS protein Acb1 (627 aa).

A 3',3'-cGAMP-binding site is contributed by Tyr105. Tyr105 serves as a coordination point for 3',3'-cUAMP. Residues 437-474 form a disordered region; sequence LADQPETESANENTEQPESGEEGEEGQPTRRAANDAKP. Active-site residues include His508, Thr510, His584, and Thr586. 2 residues coordinate 3',3'-cGAMP: Glu614 and Trp620. Residues Glu614 and Trp620 each coordinate 3',3'-cUAMP.

This sequence belongs to the anti-CBASS protein Acb1 family.

It carries out the reaction 3',3'-cUAMP + H2O = U[3'-5']pAp[3'] + H(+). The enzyme catalyses 3',3',3'-c-tri-AMP + H2O = A[3'-5']pA[3'-5']pAp[3'] + H(+). It catalyses the reaction 3',3',3'-cAAG + H2O = G[3'-5']pA[3'-5']pAp[3'] + H(+). The catalysed reaction is 3',3',3'-cAAG + H2O = A[3'-5']pG[3'-5']pAp[3'] + H(+). It carries out the reaction 3',3'-cGAMP + H2O = G[3'-5']pAp[3'] + H(+). Its function is as follows. Counteracts or regulates the endogenous CBASS antiviral defense system. Phosphodiesterase that enables metal-independent hydrolysis of the host cyclic di- and trinucleotide CBASS signals such as 3'3'-cGAMP, 3'3'cUA, and 3'3'3'-cAAA. This chain is Anti-CBASS protein Acb1, found in Caulobacter sp. (strain RHG1).